The following is a 242-amino-acid chain: Carboxy-S-adenosyl-L-methionine synthase (242 aa).

S-adenosyl-L-methionine is bound by residues Tyr39, 64–66 (GCS), 89–90 (DN), 117–118 (DI), Asn132, and Arg199.

The protein belongs to the class I-like SAM-binding methyltransferase superfamily. Cx-SAM synthase family. In terms of assembly, homodimer.

It carries out the reaction prephenate + S-adenosyl-L-methionine = carboxy-S-adenosyl-L-methionine + 3-phenylpyruvate + H2O. In terms of biological role, catalyzes the conversion of S-adenosyl-L-methionine (SAM) to carboxy-S-adenosyl-L-methionine (Cx-SAM). This is Carboxy-S-adenosyl-L-methionine synthase from Aliivibrio fischeri (strain MJ11) (Vibrio fischeri).